Reading from the N-terminus, the 488-residue chain is Envelope glycoprotein gp62 (488 aa).

An N-terminal signal peptide occupies residues 1 to 20; the sequence is MGKFLATLILFFQFCPLILG. The Extracellular segment spans residues 21–442; that stretch reads DYSPSCCTLT…LGLSQWAREA (422 aa). Residues Asn-140 and Asn-222 are each glycosylated (N-linked (GlcNAc...) asparagine; by host). Residues 225 to 228 carry the CXXC motif; that stretch reads CIVC. Disulfide bonds link Cys-225–Cys-228, Cys-225–Cys-401, and Cys-393–Cys-400. Residues Asn-244 and Asn-272 are each glycosylated (N-linked (GlcNAc...) asparagine; by host). The interval 313–333 is fusion peptide; sequence AVPVAVWLVSALAMGAGVAGG. Residues 327–339 form a gly-rich region; it reads GAGVAGGITGSMS. 2 coiled-coil regions span residues 340 to 385 and 397 to 429; these read LASG…LDLL and QEQC…GWGL. The interval 376–392 is immunosuppression; that stretch reads AQNRRGLDLLFWEQGGL. A CX6CC motif is present at residues 393–401; the sequence is CKALQEQCC. Asn-404 carries an N-linked (GlcNAc...) asparagine; by host glycan. The chain crosses the membrane as a helical span at residues 443–463; that stretch reads LQTGITLVALLLLVILAGPCI. The S-palmitoyl cysteine; by host moiety is linked to residue Cys-462. The Cytoplasmic portion of the chain corresponds to 464 to 488; the sequence is LRQLRHLPSRVRYPHYSLINPESSL.

As to quaternary structure, the mature envelope protein (Env) consists of a trimer of SU-TM heterodimers attached by a labile interchain disulfide bond. Specific enzymatic cleavages in vivo yield mature proteins. Envelope glycoproteins are synthesized as an inactive precursor that is N-glycosylated and processed likely by host cell furin or by a furin-like protease in the Golgi to yield the mature SU and TM proteins. The cleavage site between SU and TM requires the minimal sequence [KR]-X-[KR]-R. In terms of processing, the CXXC motif is highly conserved across a broad range of retroviral envelope proteins. It is thought to participate in the formation of a labile disulfide bond possibly with the CX6CC motif present in the transmembrane protein. Isomerization of the intersubunit disulfide bond to an SU intrachain disulfide bond is thought to occur upon receptor recognition in order to allow membrane fusion. Post-translationally, the transmembrane protein is palmitoylated.

The protein localises to the virion membrane. Its subcellular location is the host cell membrane. In terms of biological role, the surface protein (SU) attaches the virus to the host cell by binding to its receptor. This interaction triggers the refolding of the transmembrane protein (TM) and is thought to activate its fusogenic potential by unmasking its fusion peptide. Fusion occurs at the host cell plasma membrane. The transmembrane protein (TM) acts as a class I viral fusion protein. Under the current model, the protein has at least 3 conformational states: pre-fusion native state, pre-hairpin intermediate state, and post-fusion hairpin state. During viral and target cell membrane fusion, the coiled coil regions (heptad repeats) assume a trimer-of-hairpins structure, positioning the fusion peptide in close proximity to the C-terminal region of the ectodomain. The formation of this structure appears to drive apposition and subsequent fusion of viral and target cell membranes. Membranes fusion leads to delivery of the nucleocapsid into the cytoplasm. The sequence is that of Envelope glycoprotein gp62 (env) from Human T-cell leukemia virus 1 (strain Japan MT-2 subtype A) (HTLV-1).